Consider the following 567-residue polypeptide: Urease subunit alpha (567 aa).

Ni(2+) is bound by residues H134, H136, and K217. K217 is subject to N6-carboxylysine. H219 serves as a coordination point for substrate. H246 and H272 together coordinate Ni(2+). H320 acts as the Proton donor in catalysis. D360 lines the Ni(2+) pocket.

This sequence belongs to the metallo-dependent hydrolases superfamily. Urease alpha subunit family. As to quaternary structure, heterotrimer of UreA (gamma), UreB (beta) and UreC (alpha) subunits. Three heterotrimers associate to form the active enzyme. Ni cation is required as a cofactor. Post-translationally, carboxylation allows a single lysine to coordinate two nickel ions.

It is found in the cytoplasm. The enzyme catalyses urea + 2 H2O + H(+) = hydrogencarbonate + 2 NH4(+). It functions in the pathway nitrogen metabolism; urea degradation; CO(2) and NH(3) from urea (urease route): step 1/1. This chain is Urease subunit alpha, found in Polynucleobacter asymbioticus (strain DSM 18221 / CIP 109841 / QLW-P1DMWA-1) (Polynucleobacter necessarius subsp. asymbioticus).